Reading from the N-terminus, the 609-residue chain is Indole-3-acetic acid-amido synthetase GH3.17 (609 aa).

It belongs to the IAA-amido conjugating enzyme family.

Catalyzes the synthesis of indole-3-acetic acid (IAA)-amino acid conjugates, providing a mechanism for the plant to cope with the presence of excess auxin. Strongly reactive with Glu, Gln, Trp, Asp, Ala, Leu, Phe, Gly, Tyr, Met, Ile and Val. Appears to favor Glu over Asp while the other GH3 favor Asp over Glu. Little or no product formation with His, Ser, Thr, Arg, Lys, or Cys. Also active on pyruvic and butyric acid analogs of IAA, PAA and the synthetic auxin naphthaleneacetic acid (NAA). The two chlorinated synthetic auxin herbicides 2,4-D and 3,6-dichloro-o-anisic acid (dicamba) cannot be used as substrates. The polypeptide is Indole-3-acetic acid-amido synthetase GH3.17 (GH3.17) (Arabidopsis thaliana (Mouse-ear cress)).